A 230-amino-acid polypeptide reads, in one-letter code: MPSAKSSDLSPTKTNLESTTKQKVSVQDIFLYIPNLIGYLRIITAIISFLCMANHPVATLIFYGISGFLDAFDGYAARKFNQGTRFGAVLDMVTDRCATSSLIVYLGVLYPQYTVFWQILVSLDLSSHYMHMYAMLSAGSTSHKNVDETQSKLLSLYYNNRLVLFFVCLINELFYMAVYLHYYKFFWLGTVMLVASTPIWLFKQIANIIQLKNASLILARMDAHDHSKRD.

The Cytoplasmic segment spans residues 1-28; that stretch reads MPSAKSSDLSPTKTNLESTTKQKVSVQD. Residues 29–51 traverse the membrane as a helical segment; it reads IFLYIPNLIGYLRIITAIISFLC. Residues 52-57 lie on the Lumenal side of the membrane; the sequence is MANHPV. The helical transmembrane segment at 58–77 threads the bilayer; the sequence is ATLIFYGISGFLDAFDGYAA. Mg(2+) is bound by residues Asp70 and Asp73. Residues Gly74, Arg78, and Thr84 each contribute to the a CDP-1,2-diacyl-sn-glycerol site. Residues 78–89 lie on the Cytoplasmic side of the membrane; sequence RKFNQGTRFGAV. The chain crosses the membrane as a helical span at residues 90–110; the sequence is LDMVTDRCATSSLIVYLGVLY. The Mg(2+) site is built by Asp91 and Asp95. The Proton acceptor role is filled by Asp95. Over 111 to 112 the chain is Lumenal; the sequence is PQ. The helical transmembrane segment at 113-133 threads the bilayer; it reads YTVFWQILVSLDLSSHYMHMY. Topologically, residues 134 to 161 are cytoplasmic; it reads AMLSAGSTSHKNVDETQSKLLSLYYNNR. Residues 162–182 traverse the membrane as a helical segment; the sequence is LVLFFVCLINELFYMAVYLHY. The Lumenal portion of the chain corresponds to 183–184; sequence YK. The chain crosses the membrane as a helical span at residues 185-205; sequence FFWLGTVMLVASTPIWLFKQI. At 206-230 the chain is on the cytoplasmic side; sequence ANIIQLKNASLILARMDAHDHSKRD.

This sequence belongs to the CDP-alcohol phosphatidyltransferase class-I family. The cofactor is Mn(2+). Requires Mg(2+) as cofactor.

Its subcellular location is the endoplasmic reticulum membrane. It catalyses the reaction a CDP-1,2-diacyl-sn-glycerol + myo-inositol = a 1,2-diacyl-sn-glycero-3-phospho-(1D-myo-inositol) + CMP + H(+). Inhibited by calcium and zinc ions. Inhibited by nucleoside triphosphates and diphosphates. Its function is as follows. Catalyzes the synthesis of phosphatidylinositol (PtdIns). Required for proper membrane dynamics and cell wall integrity. The protein is CDP-diacylglycerol--inositol 3-phosphatidyltransferase of Candida albicans (strain SC5314 / ATCC MYA-2876) (Yeast).